Reading from the N-terminus, the 929-residue chain is Isoleucine--tRNA ligase (929 aa).

The 'HIGH' region motif lies at 58–68; it reads PYANGDIHIGH. An L-isoleucyl-5'-AMP-binding site is contributed by Glu563. The 'KMSKS' region signature appears at 605 to 609; it reads KMSKS. An ATP-binding site is contributed by Lys608. Residues Cys892, Cys895, Cys912, and Cys915 each coordinate Zn(2+).

The protein belongs to the class-I aminoacyl-tRNA synthetase family. IleS type 1 subfamily. In terms of assembly, monomer. Zn(2+) is required as a cofactor.

Its subcellular location is the cytoplasm. It carries out the reaction tRNA(Ile) + L-isoleucine + ATP = L-isoleucyl-tRNA(Ile) + AMP + diphosphate. In terms of biological role, catalyzes the attachment of isoleucine to tRNA(Ile). As IleRS can inadvertently accommodate and process structurally similar amino acids such as valine, to avoid such errors it has two additional distinct tRNA(Ile)-dependent editing activities. One activity is designated as 'pretransfer' editing and involves the hydrolysis of activated Val-AMP. The other activity is designated 'posttransfer' editing and involves deacylation of mischarged Val-tRNA(Ile). This chain is Isoleucine--tRNA ligase, found in Neisseria meningitidis serogroup A / serotype 4A (strain DSM 15465 / Z2491).